Reading from the N-terminus, the 400-residue chain is MGGWSSKPRKGMGTNLAVPNPLGFFPDHQLDPAFKANSDNPDWDLNPHKDNWPDANKVGVGAFGPGFTPPHGGLLGWSPQAQGLLTTVPAAPPPASTSRQSGRQPTPLSPPLRDTHPQAMQWNSTTFHQTLQDPRVRALYFPAGGSSSGTVSPAQNTVSAISSTLSKTGDPVPNMENISSGLLGPLLVLQAGFFLLTKILTIPQSLDSWWTSLNFLGQTPVCLGQNSQSQISSHSLTCCPPICPGYRWMCLRRFIIFLCILLLCLIFLLVLLDCQGMLPVCPLIPGSSTTSTGPCKTCTTPAQGTSMFPSCCCTKPTDGNCTCIPIPSSWAFAKFLWEWASVRFSWLSLLVPFVQWFVGLSPTVWLSVIWMMWFWGPSLCNILSPFMPLLPIFFCLWVYI.

Met1 carries the post-translational modification N-acetylmethionine. Gly2 carries the N-myristoyl glycine; by host lipid modification. The pre-S1 stretch occupies residues 2 to 119 (GGWSSKPRKG…PPLRDTHPQA (118 aa)). The tract at residues 2-174 (GGWSSKPRKG…LSKTGDPVPN (173 aa)) is pre-S. Topologically, residues 2–181 (GGWSSKPRKG…VPNMENISSG (180 aa)) are virion surface; in external conformation. Over 2-253 (GGWSSKPRKG…PGYRWMCLRR (252 aa)) the chain is Intravirion; in internal conformation. Trp4 carries N-linked (GlcNAc...) asparagine glycosylation. Disordered stretches follow at residues 29–50 (QLDPAFKANSDNPDWDLNPHKD) and 85–118 (LTTVPAAPPPASTSRQSGRQPTPLSPPLRDTHPQ). Residues 96–106 (STSRQSGRQPT) are compositionally biased toward polar residues. The pre-S2 stretch occupies residues 120–174 (MQWNSTTFHQTLQDPRVRALYFPAGGSSSGTVSPAQNTVSAISSTLSKTGDPVPN). A helical transmembrane segment spans residues 182–202 (LLGPLLVLQAGFFLLTKILTI). Over 203 to 253 (PQSLDSWWTSLNFLGQTPVCLGQNSQSQISSHSLTCCPPICPGYRWMCLRR) the chain is Intravirion; in external conformation. A helical transmembrane segment spans residues 254 to 274 (FIIFLCILLLCLIFLLVLLDC). Residues 275–348 (QGMLPVCPLI…WASVRFSWLS (74 aa)) lie on the Virion surface side of the membrane. Asn320 carries an N-linked (GlcNAc...) asparagine; by host glycan. Residues 349 to 369 (LLVPFVQWFVGLSPTVWLSVI) traverse the membrane as a helical segment. The Intravirion portion of the chain corresponds to 370–375 (WMMWFW). A helical membrane pass occupies residues 376 to 398 (GPSLCNILSPFMPLLPIFFCLWV). Over 399-400 (YI) the chain is Virion surface.

Belongs to the orthohepadnavirus major surface antigen family. Interacts (via its myristoylated pre-S1 region) with the host SLC10A1/NTCP; this interaction is essential for viral entry. As to quaternary structure, in its internal form (Li-HBsAg), interacts with the capsid protein and with the isoform S. Interacts with host chaperone CANX. In terms of assembly, associates with host chaperone CANX through its pre-S2 N glycan; this association may be essential for isoform M proper secretion. Interacts with isoform L. Interacts with the antigens of satellite virus HDV (HDVAgs); this interaction is required for encapsidation of HDV genomic RNA. Isoform M is N-terminally acetylated by host at a ratio of 90%, and N-glycosylated by host at the pre-S2 region. Post-translationally, myristoylated; this modification is essential for its interaction with the host protein SLC10A1/NTCP.

The protein resides in the virion membrane. Functionally, the large envelope protein exists in two topological conformations, one which is termed 'external' or Le-HBsAg and the other 'internal' or Li-HBsAg. In its external conformation the protein attaches the virus to cell receptors and thereby initiating infection. This interaction determines the species specificity and liver tropism. This attachment induces virion internalization predominantly through caveolin-mediated endocytosis. The large envelope protein also assures fusion between virion membrane and endosomal membrane. In its internal conformation the protein plays a role in virion morphogenesis and mediates the contact with the nucleocapsid like a matrix protein. The middle envelope protein plays an important role in the budding of the virion. It is involved in the induction of budding in a nucleocapsid independent way. In this process the majority of envelope proteins bud to form subviral lipoprotein particles of 22 nm of diameter that do not contain a nucleocapsid. The polypeptide is Large envelope protein (Homo sapiens (Human)).